We begin with the raw amino-acid sequence, 582 residues long: Protein bps2 (582 aa).

28 to 35 is an ATP binding site; it reads APNAYGKT. Residues 243 to 281 adopt a coiled-coil conformation; it reads RQSYERQLQEINAQLQKITAQRNEAEIEIRLLEKVLDQI. One can recognise a Zinc-hook domain in the interval 243 to 351; sequence RQSYERQLQE…KLKELDQISS (109 aa). Zn(2+)-binding residues include Cys292 and Cys295. Positions 320 to 351 form a coiled coil; sequence SLYAGIKKEADELLSKKSEIEKKLKELDQISS.

This is Protein bps2 (bps2) from Acidianus ambivalens (Desulfurolobus ambivalens).